The primary structure comprises 419 residues: Protein indeterminate-domain 14 (419 aa).

A disordered region spans residues 1–58 (MIDYERSNTTKNINTHHHNPPPSSSSSDLLPDGNGTAVTQKRKRRPAGTPDPEAEVVS). 3 C2H2-type zinc fingers span residues 70 to 92 (YVCE…RRRH), 112 to 142 (YVCP…RRKH), and 148 to 175 (WICE…TRGH). Zn(2+) contacts are provided by cysteine 150, cysteine 153, histidine 166, cysteine 170, cysteine 177, cysteine 179, histidine 192, and cysteine 196. A CCHC-type 2; atypical zinc finger spans residues 175–198 (HSCDCGRVFSRVESFIEHQDTCTV). An SHR-binding region spans residues 185-197 (RVESFIEHQDTCT). Disordered regions lie at residues 200–259 (RSQP…PSTL) and 298–318 (SEVE…EEAR). Low complexity-rich tracts occupy residues 213-230 (QHTT…NNEN) and 246-259 (RRQS…PSTL). Positions 313–349 (EREEARRETKRQIEIAELEFAEAKRIRQHARAELHKA) form a coiled coil.

In terms of assembly, homo- and heterodimer of IDD14alpha and IDD14beta. As to expression, expressed in cotyledons and the vasculature of reosette leaves. Weak expression in hypocotyls and floral organs, but not detected in roots and inflorescence stems.

Its subcellular location is the nucleus. Transcription factor regulating starch metabolism by binding directly to the promoter of QQS. The IDD14beta isoform attenuates the transcription factor activity by competitively forming heterodimers with reduced DNA-binding capacity. Regulates lateral organ morphogenesis and gravitropic responses. Has a redundant role with IDD16 in directing leaf and floral organ morphogenesis. Involved in the establishment of auxin gradients through the regulation of auxin biosynthesis and transport. The polypeptide is Protein indeterminate-domain 14 (Arabidopsis thaliana (Mouse-ear cress)).